A 330-amino-acid polypeptide reads, in one-letter code: Membrane-associated protein VIPP1, chloroplastic (330 aa).

Residues 1–64 constitute a chloroplast transit peptide; it reads MALKASPVTG…LRLACDNRLR (64 aa). Coiled coils occupy residues 124–259 and 312–329; these read SQKQ…LTQI and KDSE…KAND. The segment at 287–312 is disordered; sequence LSGSSKKGELPPGRSTVAASTRYPFK.

This sequence belongs to the PspA/Vipp/IM30 family. Homomultimer. Complex formation involves interaction via the central alpha-helical domain (71-286).

The protein localises to the plastid. It localises to the chloroplast inner membrane. It is found in the chloroplast thylakoid membrane. In terms of biological role, required for plastid vesicle formation and thylakoid membrane biogenesis, but not for functional assembly of thylakoid protein complexes. This is Membrane-associated protein VIPP1, chloroplastic from Arabidopsis thaliana (Mouse-ear cress).